The sequence spans 214 residues: Cytochrome b (214 aa).

The next 4 helical transmembrane spans lie at 31 to 51 (FGSM…FLAI), 75 to 96 (WIMQ…YIHI), 111 to 131 (WLSG…GYVL), and 176 to 196 (FFAL…IHIL). Residues His81 and His95 each coordinate heme b. Positions 180 and 194 each coordinate heme b. Residue His199 participates in a ubiquinone binding.

This sequence belongs to the cytochrome b family. In terms of assembly, the cytochrome bc1 complex contains 3 respiratory subunits (MT-CYB, CYC1 and UQCRFS1), 2 core proteins (UQCRC1 and UQCRC2) and probably 6 low-molecular weight proteins. It depends on heme b as a cofactor.

The protein resides in the mitochondrion inner membrane. Functionally, component of the ubiquinol-cytochrome c reductase complex (complex III or cytochrome b-c1 complex) that is part of the mitochondrial respiratory chain. The b-c1 complex mediates electron transfer from ubiquinol to cytochrome c. Contributes to the generation of a proton gradient across the mitochondrial membrane that is then used for ATP synthesis. The chain is Cytochrome b (MT-CYB) from Bothrops atrox (Barba amarilla).